The sequence spans 346 residues: (R,R)-butanediol dehydrogenase (346 aa).

Zn(2+)-binding residues include cysteine 37, histidine 70, and glutamate 152.

The protein belongs to the zinc-containing alcohol dehydrogenase family. Homotetramer. Interacts with BrxC. Requires Zn(2+) as cofactor.

It localises to the cytoplasm. It is found in the secreted. It catalyses the reaction (R,R)-butane-2,3-diol + NAD(+) = (R)-acetoin + NADH + H(+). The protein is (R,R)-butanediol dehydrogenase of Bacillus subtilis (strain 168).